The chain runs to 286 residues: Bifunctional protein FolD (286 aa).

NADP(+)-binding positions include 165-167 (GRS) and serine 190.

The protein belongs to the tetrahydrofolate dehydrogenase/cyclohydrolase family. As to quaternary structure, homodimer.

The catalysed reaction is (6R)-5,10-methylene-5,6,7,8-tetrahydrofolate + NADP(+) = (6R)-5,10-methenyltetrahydrofolate + NADPH. The enzyme catalyses (6R)-5,10-methenyltetrahydrofolate + H2O = (6R)-10-formyltetrahydrofolate + H(+). It participates in one-carbon metabolism; tetrahydrofolate interconversion. Functionally, catalyzes the oxidation of 5,10-methylenetetrahydrofolate to 5,10-methenyltetrahydrofolate and then the hydrolysis of 5,10-methenyltetrahydrofolate to 10-formyltetrahydrofolate. The protein is Bifunctional protein FolD of Staphylococcus aureus (strain bovine RF122 / ET3-1).